The chain runs to 314 residues: Serine/threonine-protein phosphatase PP2A-4 catalytic subunit (314 aa).

Aspartate 62, histidine 64, aspartate 90, and asparagine 122 together coordinate Mn(2+). Histidine 123 serves as the catalytic Proton donor. Histidine 172 and histidine 246 together coordinate Mn(2+).

Belongs to the PPP phosphatase family. PP-2A subfamily. The cofactor is Mn(2+).

The protein localises to the cytoplasm. It catalyses the reaction O-phospho-L-seryl-[protein] + H2O = L-seryl-[protein] + phosphate. It carries out the reaction O-phospho-L-threonyl-[protein] + H2O = L-threonyl-[protein] + phosphate. This Oryza sativa subsp. japonica (Rice) protein is Serine/threonine-protein phosphatase PP2A-4 catalytic subunit (PP2A4).